Reading from the N-terminus, the 212-residue chain is Uridine kinase (212 aa).

An ATP-binding site is contributed by 13 to 20 (GASASGKS).

This sequence belongs to the uridine kinase family.

It localises to the cytoplasm. It carries out the reaction uridine + ATP = UMP + ADP + H(+). It catalyses the reaction cytidine + ATP = CMP + ADP + H(+). It functions in the pathway pyrimidine metabolism; CTP biosynthesis via salvage pathway; CTP from cytidine: step 1/3. The protein operates within pyrimidine metabolism; UMP biosynthesis via salvage pathway; UMP from uridine: step 1/1. In Shewanella baltica (strain OS223), this protein is Uridine kinase.